Consider the following 243-residue polypeptide: ATP synthase subunit a (243 aa).

7 helical membrane-spanning segments follow: residues 29–49 (NASL…YIGL), 54–74 (ILPN…VSTI), 89–109 (VFTI…PLGF), 114–134 (HIAV…AIGF), 144–164 (ILLP…IELF), 182–202 (IAGH…NIFL), and 208–228 (AFII…AYIF).

Belongs to the ATPase A chain family. As to quaternary structure, F-type ATPases have 2 components, CF(1) - the catalytic core - and CF(0) - the membrane proton channel. CF(1) has five subunits: alpha(3), beta(3), gamma(1), delta(1), epsilon(1). CF(0) has three main subunits: a(1), b(2) and c(9-12). The alpha and beta chains form an alternating ring which encloses part of the gamma chain. CF(1) is attached to CF(0) by a central stalk formed by the gamma and epsilon chains, while a peripheral stalk is formed by the delta and b chains.

The protein localises to the cell inner membrane. Its function is as follows. Key component of the proton channel; it plays a direct role in the translocation of protons across the membrane. The sequence is that of ATP synthase subunit a from Ehrlichia chaffeensis (strain ATCC CRL-10679 / Arkansas).